We begin with the raw amino-acid sequence, 700 residues long: MERKELSYTIQSWSSYSGAFHPINILIDNPHQANSRWSCNTSICKPNNSEEQYVILKLDKLALVTDITFGKFHTPHLCNLKDFIVYGGREQHLMFPLLRAGLTNDSNRETFPLCIKKYNKIENSIACKYIKIVPLQAHAHEFNMSIWYVALHGIDSASALSCTEKNRALHLEKKALNCLLSYFAFKGKLDICSVILQSYQLSIPHSPLMRMYDAFCRLGDTQKTILLFQQELQAEIIEKWPKHKLTKLRSHRIATFLKGISRRSGHQMVYNPKDNCIYLYGGWDGVKTFSDFWIYNVDKDLWIMENEYGIPGERVCHRMVIDTSQQKLYLLGNYFGSSRETEVPPDARTDFWEFDISKKVWTCLSYDTSKDGGPAAIFDHGMSVDEKRGIVYVSGGCKWDPDELVFEGLYAYDTKNRIWEQLAVRYEDRQKHCEFKIERMGHCMEYFPDENKLYIFGGQSYDQEFILDMCYIKLETREAVQHVRKNDTSQSPSPSFCQRSIMDSKNHRIFTMFGFEQRNIHKVLRPSLWIFYITTEEWVKISDINEEEGNEHPCSRFGHAVAADLNRNIIYLMGGNASTHPLRPMKLSDFWKLDILDRWGIKHCLSNVSLQLHLHRFHELVSENLAKAVEYLQKSMQPQFDKSPLFWNALILDAFSGTHKNKDIAQRRFETFQTIYDLLPVDENTVAPNESLLNMIEFFT.

6 Kelch repeats span residues cysteine 276–aspartate 322, lysine 327–glycine 381, isoleucine 390–arginine 439, lysine 452–arginine 499, arginine 508–glycine 558, and isoleucine 569–glutamate 619.

The protein is Mei4-dependent protein 6 (mde6) of Schizosaccharomyces pombe (strain 972 / ATCC 24843) (Fission yeast).